The chain runs to 414 residues: Histidinol dehydrogenase (414 aa).

3 residues coordinate NAD(+): Tyr-116, Gln-177, and Asn-200. Substrate is bound by residues Thr-223, Gln-245, and His-248. Zn(2+) contacts are provided by Gln-245 and His-248. Catalysis depends on proton acceptor residues Glu-313 and His-314. The substrate site is built by His-314, Asp-347, Glu-401, and His-406. Asp-347 provides a ligand contact to Zn(2+). His-406 serves as a coordination point for Zn(2+).

Belongs to the histidinol dehydrogenase family. Zn(2+) is required as a cofactor.

It catalyses the reaction L-histidinol + 2 NAD(+) + H2O = L-histidine + 2 NADH + 3 H(+). Its pathway is amino-acid biosynthesis; L-histidine biosynthesis; L-histidine from 5-phospho-alpha-D-ribose 1-diphosphate: step 9/9. In terms of biological role, catalyzes the sequential NAD-dependent oxidations of L-histidinol to L-histidinaldehyde and then to L-histidine. In Staphylococcus epidermidis (strain ATCC 35984 / DSM 28319 / BCRC 17069 / CCUG 31568 / BM 3577 / RP62A), this protein is Histidinol dehydrogenase.